Consider the following 382-residue polypeptide: 1-deoxy-D-xylulose 5-phosphate reductoisomerase (382 aa).

NADPH is bound by residues T10, G11, S12, I13, G36, and N122. Residue K123 coordinates 1-deoxy-D-xylulose 5-phosphate. An NADPH-binding site is contributed by E124. D148 provides a ligand contact to Mn(2+). 1-deoxy-D-xylulose 5-phosphate is bound by residues S149, E150, S174, and H197. Residue E150 coordinates Mn(2+). G203 serves as a coordination point for NADPH. S210, N215, K216, and E219 together coordinate 1-deoxy-D-xylulose 5-phosphate. E219 contributes to the Mn(2+) binding site.

It belongs to the DXR family. It depends on Mg(2+) as a cofactor. The cofactor is Mn(2+).

The enzyme catalyses 2-C-methyl-D-erythritol 4-phosphate + NADP(+) = 1-deoxy-D-xylulose 5-phosphate + NADPH + H(+). The protein operates within isoprenoid biosynthesis; isopentenyl diphosphate biosynthesis via DXP pathway; isopentenyl diphosphate from 1-deoxy-D-xylulose 5-phosphate: step 1/6. Its function is as follows. Catalyzes the NADPH-dependent rearrangement and reduction of 1-deoxy-D-xylulose-5-phosphate (DXP) to 2-C-methyl-D-erythritol 4-phosphate (MEP). This Prosthecochloris aestuarii (strain DSM 271 / SK 413) protein is 1-deoxy-D-xylulose 5-phosphate reductoisomerase.